The following is a 204-amino-acid chain: GTP cyclohydrolase-2 (204 aa).

Residue 49–53 coordinates GTP; the sequence is RIHSE. 3 residues coordinate Zn(2+): Cys-54, Cys-65, and Cys-67. GTP-binding positions include Gln-70, 92–94, and Thr-114; that span reads EGR. The Proton acceptor role is filled by Asp-126. The Nucleophile role is filled by Arg-128. GTP-binding residues include Thr-149 and Lys-154.

Belongs to the GTP cyclohydrolase II family. The cofactor is Zn(2+).

It carries out the reaction GTP + 4 H2O = 2,5-diamino-6-hydroxy-4-(5-phosphoribosylamino)-pyrimidine + formate + 2 phosphate + 3 H(+). Its pathway is cofactor biosynthesis; riboflavin biosynthesis; 5-amino-6-(D-ribitylamino)uracil from GTP: step 1/4. In terms of biological role, catalyzes the conversion of GTP to 2,5-diamino-6-ribosylamino-4(3H)-pyrimidinone 5'-phosphate (DARP), formate and pyrophosphate. The polypeptide is GTP cyclohydrolase-2 (Shewanella baltica (strain OS155 / ATCC BAA-1091)).